Reading from the N-terminus, the 224-residue chain is PHD finger-containing protein 5 (224 aa).

The PHD-type zinc finger occupies 31–81 (KKPCEVCGSDANELLMMTCFMCRDTREHTYCARVMFQRVPRLWICEECRDF). Residues cysteine 34, cysteine 37, cysteine 49, cysteine 52, histidine 58, cysteine 61, cysteine 75, and cysteine 78 each coordinate Zn(2+). Positions 116-137 (PRTNQVVDNHQDPPIDQTDPSS) are disordered.

As to quaternary structure, interacts directly with AIPP3/BDT1.

Together with AIPP3/BDT1, cooperates to form a BAH-PHD bivalent histone reader complex able to read histone H3 lysine 27 trimethylation (H3K27me3) histone marks in order to regulate transcription, especially to prevent early flowering; promotes AIPP3/BDT1 binding to H3K27me3. This Arabidopsis thaliana (Mouse-ear cress) protein is PHD finger-containing protein 5.